The sequence spans 498 residues: Glycerol kinase (498 aa).

ADP is bound at residue threonine 12. 3 residues coordinate ATP: threonine 12, threonine 13, and serine 14. Threonine 12 is a binding site for sn-glycerol 3-phosphate. Arginine 16 serves as a coordination point for ADP. Sn-glycerol 3-phosphate contacts are provided by arginine 82, glutamate 83, tyrosine 134, and aspartate 243. The glycerol site is built by arginine 82, glutamate 83, tyrosine 134, aspartate 243, and glutamine 244. ADP is bound by residues threonine 265 and glycine 308. Threonine 265, glycine 308, glutamine 312, and glycine 409 together coordinate ATP. ADP is bound by residues glycine 409 and asparagine 413.

It belongs to the FGGY kinase family. Homotetramer and homodimer (in equilibrium).

The catalysed reaction is glycerol + ATP = sn-glycerol 3-phosphate + ADP + H(+). It participates in polyol metabolism; glycerol degradation via glycerol kinase pathway; sn-glycerol 3-phosphate from glycerol: step 1/1. Its activity is regulated as follows. Activated by phosphorylation and inhibited by fructose 1,6-bisphosphate (FBP). In terms of biological role, key enzyme in the regulation of glycerol uptake and metabolism. Catalyzes the phosphorylation of glycerol to yield sn-glycerol 3-phosphate. This is Glycerol kinase from Clostridium botulinum (strain Loch Maree / Type A3).